Here is a 192-residue protein sequence, read N- to C-terminus: Fe/S biogenesis protein NfuA (192 aa).

[4Fe-4S] cluster contacts are provided by C149 and C152.

This sequence belongs to the NfuA family. In terms of assembly, homodimer. [4Fe-4S] cluster is required as a cofactor.

Its function is as follows. Involved in iron-sulfur cluster biogenesis. Binds a 4Fe-4S cluster, can transfer this cluster to apoproteins, and thereby intervenes in the maturation of Fe/S proteins. Could also act as a scaffold/chaperone for damaged Fe/S proteins. The protein is Fe/S biogenesis protein NfuA of Tolumonas auensis (strain DSM 9187 / NBRC 110442 / TA 4).